The primary structure comprises 484 residues: tRNA sulfurtransferase (484 aa).

A THUMP domain is found at 63-167; that stretch reads DVFADRLACI…QDKLYMVERR (105 aa). ATP is bound by residues 185-186, lysine 267, glycine 289, and glutamine 298; that span reads LI. Cysteines 346 and 458 form a disulfide. Residues 406 to 484 enclose the Rhodanese domain; sequence VASGEIIIDV…GYTNVKVYRP (79 aa). The Cysteine persulfide intermediate role is filled by cysteine 458.

This sequence belongs to the ThiI family.

It localises to the cytoplasm. The catalysed reaction is [ThiI sulfur-carrier protein]-S-sulfanyl-L-cysteine + a uridine in tRNA + 2 reduced [2Fe-2S]-[ferredoxin] + ATP + H(+) = [ThiI sulfur-carrier protein]-L-cysteine + a 4-thiouridine in tRNA + 2 oxidized [2Fe-2S]-[ferredoxin] + AMP + diphosphate. It carries out the reaction [ThiS sulfur-carrier protein]-C-terminal Gly-Gly-AMP + S-sulfanyl-L-cysteinyl-[cysteine desulfurase] + AH2 = [ThiS sulfur-carrier protein]-C-terminal-Gly-aminoethanethioate + L-cysteinyl-[cysteine desulfurase] + A + AMP + 2 H(+). It functions in the pathway cofactor biosynthesis; thiamine diphosphate biosynthesis. Its function is as follows. Catalyzes the ATP-dependent transfer of a sulfur to tRNA to produce 4-thiouridine in position 8 of tRNAs, which functions as a near-UV photosensor. Also catalyzes the transfer of sulfur to the sulfur carrier protein ThiS, forming ThiS-thiocarboxylate. This is a step in the synthesis of thiazole, in the thiamine biosynthesis pathway. The sulfur is donated as persulfide by IscS. The polypeptide is tRNA sulfurtransferase (Shewanella frigidimarina (strain NCIMB 400)).